The following is a 147-amino-acid chain: 3-dehydroquinate dehydratase 1 (147 aa).

Y23 acts as the Proton acceptor in catalysis. N75, H81, and D88 together coordinate substrate. H101 acts as the Proton donor in catalysis. Substrate contacts are provided by residues 102–103 and R112; that span reads LS.

It belongs to the type-II 3-dehydroquinase family. In terms of assembly, homododecamer.

The enzyme catalyses 3-dehydroquinate = 3-dehydroshikimate + H2O. The protein operates within metabolic intermediate biosynthesis; chorismate biosynthesis; chorismate from D-erythrose 4-phosphate and phosphoenolpyruvate: step 3/7. Its function is as follows. Catalyzes a trans-dehydration via an enolate intermediate. The protein is 3-dehydroquinate dehydratase 1 (aroQ1) of Pseudomonas aeruginosa (strain ATCC 15692 / DSM 22644 / CIP 104116 / JCM 14847 / LMG 12228 / 1C / PRS 101 / PAO1).